We begin with the raw amino-acid sequence, 71 residues long: DNA-directed RNA polymerases I, II, and III subunit RPABC5 (71 aa).

The Zn(2+) site is built by cysteine 7, cysteine 10, cysteine 44, and cysteine 45.

It belongs to the archaeal Rpo10/eukaryotic RPB10 RNA polymerase subunit family. Component of the RNA polymerase I (Pol I), RNA polymerase II (Pol II) and RNA polymerase III (Pol III) complexes consisting of at least 13, 12 and 17 subunits, respectively.

It is found in the nucleus. Functionally, DNA-dependent RNA polymerase catalyzes the transcription of DNA into RNA using the four ribonucleoside triphosphates as substrates. Common component of RNA polymerases I, II and III which synthesize ribosomal RNA precursors, mRNA precursors and many functional non-coding RNAs, and a small RNAs, such as 5S rRNA and tRNAs, respectively. Pol II is the central component of the basal RNA polymerase II transcription machinery. Pols are composed of mobile elements that move relative to each other. In Pol II, RBP10 is part of the core element with the central large cleft. This chain is DNA-directed RNA polymerases I, II, and III subunit RPABC5, found in Brassica napus (Rape).